The primary structure comprises 471 residues: Amidophosphoribosyltransferase (471 aa).

Catalysis depends on C2, which acts as the Nucleophile. Residues 2–224 form the Glutamine amidotransferase type-2 domain; that stretch reads CGIFGIYSYE…PGEIIEIKDG (223 aa). C255 is a binding site for [4Fe-4S] cluster. Residues S302, D364, and D365 each coordinate Mg(2+). 3 residues coordinate [4Fe-4S] cluster: C401, C450, and C453.

In the C-terminal section; belongs to the purine/pyrimidine phosphoribosyltransferase family. It depends on Mg(2+) as a cofactor. Requires [4Fe-4S] cluster as cofactor.

It catalyses the reaction 5-phospho-beta-D-ribosylamine + L-glutamate + diphosphate = 5-phospho-alpha-D-ribose 1-diphosphate + L-glutamine + H2O. Its pathway is purine metabolism; IMP biosynthesis via de novo pathway; N(1)-(5-phospho-D-ribosyl)glycinamide from 5-phospho-alpha-D-ribose 1-diphosphate: step 1/2. Catalyzes the formation of phosphoribosylamine from phosphoribosylpyrophosphate (PRPP) and glutamine. This is Amidophosphoribosyltransferase from Methanocaldococcus jannaschii (strain ATCC 43067 / DSM 2661 / JAL-1 / JCM 10045 / NBRC 100440) (Methanococcus jannaschii).